The primary structure comprises 441 residues: Probable membrane metalloprotease ARASP2, chloroplastic (441 aa).

The transit peptide at 1 to 84 (MLLNISSSPI…DFGSLESVLE (84 aa)) directs the protein to the chloroplast. A Zn(2+)-binding site is contributed by H96. E97 is a catalytic residue. A Zn(2+)-binding site is contributed by H100. The helical transmembrane segment at 171–191 (VIVVSAGIVANVIFAYAIIFT) threads the bilayer. The region spanning 196–249 (VGLPVQESFPGVLVPDVKSFSAASRDGLLPGDVILAVDGTELSNSGSDSVSKVV) is the PDZ domain. Transmembrane regions (helical) follow at residues 373–393 (LAVINLLPLPALDGGTLALIL) and 407–427 (VEQGIMSSGIMLVLFLGLFLI).

The protein belongs to the peptidase M50A family. It depends on Zn(2+) as a cofactor.

The protein localises to the plastid. Its subcellular location is the chloroplast inner membrane. In terms of biological role, metalloprotease essential for chloroplast and plant development. May be involved in regulated intramembrane proteolysis (RIP). The sequence is that of Probable membrane metalloprotease ARASP2, chloroplastic from Arabidopsis thaliana (Mouse-ear cress).